Here is a 259-residue protein sequence, read N- to C-terminus: UPF0246 protein Pmen_1032 (259 aa).

This sequence belongs to the UPF0246 family.

The polypeptide is UPF0246 protein Pmen_1032 (Ectopseudomonas mendocina (strain ymp) (Pseudomonas mendocina)).